Consider the following 358-residue polypeptide: Probable tartrate dehydrogenase/decarboxylase TtuC' (358 aa).

Mn(2+) contacts are provided by Asp-222, Asp-246, and Asp-250.

The protein belongs to the isocitrate and isopropylmalate dehydrogenases family. It depends on Mg(2+) as a cofactor. Requires Mn(2+) as cofactor. K(+) serves as cofactor.

It localises to the cytoplasm. It carries out the reaction tartrate + NAD(+) = 2-hydroxy-3-oxosuccinate + NADH + H(+). It catalyses the reaction (2R,3S)-tartrate + NAD(+) = 2-hydroxy-3-oxosuccinate + NADH + H(+). The catalysed reaction is (2R,3R)-tartrate + NAD(+) = 2-hydroxy-3-oxosuccinate + NADH + H(+). The enzyme catalyses (2R,3R)-tartrate + H(+) = (R)-glycerate + CO2. It carries out the reaction (R)-malate + NAD(+) = pyruvate + CO2 + NADH. The protein operates within carbohydrate acid metabolism; tartrate degradation; 2-hydroxy-3-oxosuccinate from L-tartrate: step 1/1. It functions in the pathway carbohydrate acid metabolism; tartrate degradation; 2-hydroxy-3-oxosuccinate from meso-tartrate: step 1/1. It participates in carbohydrate acid metabolism; tartrate degradation; D-glycerate from L-tartrate: step 1/1. Has multiple catalytic activities. Apart from catalyzing the oxidation of (+)-tartrate to oxaloglycolate, also converts meso-tartrate to D-glycerate and catalyzes the oxidative decarboxylation of D-malate to pyruvate. In Agrobacterium vitis (Rhizobium vitis), this protein is Probable tartrate dehydrogenase/decarboxylase TtuC' (ttuC').